The sequence spans 456 residues: Protein king tubby (456 aa).

A disordered region spans residues 111-202; it reads HELEDEESSP…SNGAGGESEG (92 aa). The span at 120–152 shows a compositional bias: polar residues; the sequence is PVTVIEQQQTAPHSANSTHSQRPSTTRQPSFND. A Phosphoserine modification is found at Ser149.

It belongs to the TUB family.

The protein localises to the cytoplasm. It localises to the nucleus. The protein resides in the cell projection. Its subcellular location is the cilium membrane. It is found in the rhabdomere. The protein is Protein king tubby of Drosophila pseudoobscura pseudoobscura (Fruit fly).